The following is a 92-amino-acid chain: Small ribosomal subunit protein uS19 (92 aa).

Belongs to the universal ribosomal protein uS19 family.

Functionally, protein S19 forms a complex with S13 that binds strongly to the 16S ribosomal RNA. The chain is Small ribosomal subunit protein uS19 from Lachnoclostridium phytofermentans (strain ATCC 700394 / DSM 18823 / ISDg) (Clostridium phytofermentans).